Here is a 127-residue protein sequence, read N- to C-terminus: Small ribosomal subunit protein uS11 (127 aa).

The protein belongs to the universal ribosomal protein uS11 family. In terms of assembly, part of the 30S ribosomal subunit. Interacts with proteins S7 and S18. Binds to IF-3.

Located on the platform of the 30S subunit, it bridges several disparate RNA helices of the 16S rRNA. Forms part of the Shine-Dalgarno cleft in the 70S ribosome. This Anaeromyxobacter sp. (strain Fw109-5) protein is Small ribosomal subunit protein uS11.